Here is a 303-residue protein sequence, read N- to C-terminus: uncharacterized protein (303 aa).

Residues 183-281 enclose the HTH araC/xylS-type domain; the sequence is KDILFYLNNN…GCSPSDYRRQ (99 aa). DNA-binding regions (H-T-H motif) lie at residues 200–221 and 248–271; these read EQLS…TKEY and QAEI…LRHV.

This is an uncharacterized protein from Escherichia coli (strain K12).